Reading from the N-terminus, the 2059-residue chain is Non-reducing polyketide synthase stmB (2059 aa).

Positions 7–243 (LLFGDQTVEL…LKLAAYGAVH (237 aa)) constitute a Starter acyltransferase (SAT) domain. The Ketosynthase family 3 (KS3) domain maps to 366-796 (SNSIAIVGMA…GGNSCLILEE (431 aa)). Catalysis depends on for beta-ketoacyl synthase activity residues C538, H673, and H713. One can recognise a Malonyl-CoA:ACP transacylase (MAT) domain in the interval 895 to 1185 (WVFSGQGSQY…CGSMVKATLG (291 aa)). The segment at 1273–1413 (LHFVKKETVT…SASEWTDEWS (141 aa)) is N-terminal hotdog fold. Residues 1273 to 1581 (LHFVKKETVT…FQRMPRMVLH (309 aa)) enclose the PKS/mFAS DH domain. H1306 (proton acceptor; for dehydratase activity) is an active-site residue. Positions 1435–1581 (GDHLRRPVVY…FQRMPRMVLH (147 aa)) are C-terminal hotdog fold. Residue D1495 is the Proton donor; for dehydratase activity of the active site. The 78-residue stretch at 1619–1696 (PPKHDLADQL…DARRALGGDE (78 aa)) folds into the Carrier domain. S1656 bears the O-(pantetheine 4'-phosphoryl)serine mark. A disordered region spans residues 1693–1727 (GGDETASESENDAEGDAPSDGGSPSGSWTPISPPE). Positions 1697–1709 (TASESENDAEGDA) are enriched in acidic residues. Residues 1710–1719 (PSDGGSPSGS) show a composition bias toward low complexity. The thioesterase (TE) domain stretch occupies residues 1778–2059 (AVEYKSNVVL…LGKLLQEAVA (282 aa)).

The cofactor is pantetheine 4'-phosphate.

Its pathway is mycotoxin biosynthesis. Its function is as follows. Non-reducing polyketide synthase; part of the gene cluster that mediates the biosynthesis of stromemycin, a depside C-glucoside with two unsaturated C9 side chains belonging to aromatic polyketide glycosides. The HR-PKS stmA and the NR-PKS stmB act as scaffold-generating enzymes responsible for the biosynthesis of the polyketide skeleton bininalkenylresorcylic acid. StmA condenses on acetyl-CoA starter unit with 4 malonyl-CoA units and the stmB uses 3 more malonyl-CoA units and catalyzes the depside bond formation. The glycoytransferase stmC then acts as the tailoring enzyme responsible for 3-C-glucosylation of bininalkenylresorcylic acid to yield stromemycin. This chain is Non-reducing polyketide synthase stmB, found in Aspergillus ustus.